The following is a 451-amino-acid chain: Glutamyl-tRNA(Gln) amidotransferase subunit D (451 aa).

A disordered region spans residues 78-97 (PREAPTPGEEEGSQEDFGQP). Residues 99–432 (PRVFFVGTGG…EEIQRLFTAN (334 aa)) enclose the Asparaginase/glutaminase domain. Catalysis depends on residues T109, T187, D188, and K266.

This sequence belongs to the asparaginase 1 family. GatD subfamily. In terms of assembly, heterodimer of GatD and GatE.

It carries out the reaction L-glutamyl-tRNA(Gln) + L-glutamine + ATP + H2O = L-glutaminyl-tRNA(Gln) + L-glutamate + ADP + phosphate + H(+). Allows the formation of correctly charged Gln-tRNA(Gln) through the transamidation of misacylated Glu-tRNA(Gln) in organisms which lack glutaminyl-tRNA synthetase. The reaction takes place in the presence of glutamine and ATP through an activated gamma-phospho-Glu-tRNA(Gln). The GatDE system is specific for glutamate and does not act on aspartate. In Thermofilum pendens (strain DSM 2475 / Hrk 5), this protein is Glutamyl-tRNA(Gln) amidotransferase subunit D.